A 311-amino-acid polypeptide reads, in one-letter code: MEIGTSLKINMIIALFLTIVSEGIFSLVIINFLKFPVIFSIIFLLILWLIQWLISPYLVERNSVEVTRDDPSYGWVYELVENVARRAGIKTPRVFLVDEPYPNAFAYGNYVTGKRIGITIPLLQILTTEELESVIGHELGHIKHNDVEIGLAIGLIPSILGFISNILLTVGWATLIFAVDEFDILVGLTMLAIGGVLFVITFFLQLFVLWFNRLRESFADYFSYELFRERAWNLAKALAKIEIYMQNIRLDPFRGIIVTIPPTKVKESDPDLLIEDLLREKTNIFSDILSTHPHPAKRIKMIYKLTKPMIF.

2 helical membrane passes run 12 to 32 and 35 to 55; these read IIAL…IINF and FPVI…WLIS. Histidine 137 provides a ligand contact to Zn(2+). Glutamate 138 is a catalytic residue. Histidine 141 contributes to the Zn(2+) binding site. Helical transmembrane passes span 159 to 179 and 184 to 204; these read ILGF…IFAV and ILVG…TFFL. Glutamate 216 serves as a coordination point for Zn(2+).

This sequence belongs to the peptidase M48B family. Zn(2+) is required as a cofactor.

The protein localises to the cell membrane. The sequence is that of Protease HtpX homolog 1 from Sulfurisphaera tokodaii (strain DSM 16993 / JCM 10545 / NBRC 100140 / 7) (Sulfolobus tokodaii).